The sequence spans 84 residues: Cell division topological specificity factor (84 aa).

It belongs to the MinE family.

In terms of biological role, prevents the cell division inhibition by proteins MinC and MinD at internal division sites while permitting inhibition at polar sites. This ensures cell division at the proper site by restricting the formation of a division septum at the midpoint of the long axis of the cell. This is Cell division topological specificity factor from Pseudomonas fluorescens (strain SBW25).